A 509-amino-acid chain; its full sequence is ATP synthase subunit alpha (509 aa).

169-176 (GDRQTGKT) is a binding site for ATP.

It belongs to the ATPase alpha/beta chains family. As to quaternary structure, F-type ATPases have 2 components, CF(1) - the catalytic core - and CF(0) - the membrane proton channel. CF(1) has five subunits: alpha(3), beta(3), gamma(1), delta(1), epsilon(1). CF(0) has three main subunits: a(1), b(2) and c(9-12). The alpha and beta chains form an alternating ring which encloses part of the gamma chain. CF(1) is attached to CF(0) by a central stalk formed by the gamma and epsilon chains, while a peripheral stalk is formed by the delta and b chains.

The protein localises to the cell inner membrane. It carries out the reaction ATP + H2O + 4 H(+)(in) = ADP + phosphate + 5 H(+)(out). Functionally, produces ATP from ADP in the presence of a proton gradient across the membrane. The alpha chain is a regulatory subunit. This chain is ATP synthase subunit alpha, found in Brucella anthropi (strain ATCC 49188 / DSM 6882 / CCUG 24695 / JCM 21032 / LMG 3331 / NBRC 15819 / NCTC 12168 / Alc 37) (Ochrobactrum anthropi).